We begin with the raw amino-acid sequence, 1164 residues long: DNA-directed RNA polymerase subunit beta (1164 aa).

2 disordered regions span residues 975 to 994 (RSSL…GKSN) and 1143 to 1164 (ANAA…MDVS). 2 stretches are compositionally biased toward basic and acidic residues: residues 981 to 991 (RDGERQVDDFG) and 1152 to 1164 (SRDE…MDVS).

Belongs to the RNA polymerase beta chain family. As to quaternary structure, the RNAP catalytic core consists of 2 alpha, 1 beta, 1 beta' and 1 omega subunit. When a sigma factor is associated with the core the holoenzyme is formed, which can initiate transcription.

The enzyme catalyses RNA(n) + a ribonucleoside 5'-triphosphate = RNA(n+1) + diphosphate. DNA-dependent RNA polymerase catalyzes the transcription of DNA into RNA using the four ribonucleoside triphosphates as substrates. The sequence is that of DNA-directed RNA polymerase subunit beta from Corynebacterium jeikeium (strain K411).